We begin with the raw amino-acid sequence, 479 residues long: Ribulose bisphosphate carboxylase large chain 2 (479 aa).

Positions 116 and 166 each coordinate substrate. The Proton acceptor role is filled by K168. Position 170 (K170) interacts with substrate. 3 residues coordinate Mg(2+): K194, D196, and E197. K194 bears the N6-carboxylysine mark. The active-site Proton acceptor is H287. Positions 288, 320, and 372 each coordinate substrate.

This sequence belongs to the RuBisCO large chain family. Type I subfamily. As to quaternary structure, heterohexadecamer of 8 large chains and 8 small chains. Mg(2+) serves as cofactor.

The catalysed reaction is 2 (2R)-3-phosphoglycerate + 2 H(+) = D-ribulose 1,5-bisphosphate + CO2 + H2O. It catalyses the reaction D-ribulose 1,5-bisphosphate + O2 = 2-phosphoglycolate + (2R)-3-phosphoglycerate + 2 H(+). Its function is as follows. RuBisCO catalyzes two reactions: the carboxylation of D-ribulose 1,5-bisphosphate, the primary event in carbon dioxide fixation, as well as the oxidative fragmentation of the pentose substrate. Both reactions occur simultaneously and in competition at the same active site. This Bradyrhizobium sp. (strain ORS 278) protein is Ribulose bisphosphate carboxylase large chain 2.